The following is an 80-amino-acid chain: Adipogenin (80 aa).

A helical transmembrane segment spans residues 16–36 (FLVFWLCLPVALLLFLTIVWL). S63 is modified (phosphoserine).

This sequence belongs to the adipogenin family. As to expression, selectively expressed in adipose tissue where it is particularly enriched in brown adipose tissue. In adipose tissue, expressed exclusively in adipocytes and not in the stromal-vascular cell population. Expressed at much lower levels in heart, stomach and muscle and barely detected in kidney and lung.

The protein localises to the membrane. It localises to the nucleus. In terms of biological role, plays a role in stimulating adipocyte differentiation and development. This Mus musculus (Mouse) protein is Adipogenin (Adig).